A 156-amino-acid polypeptide reads, in one-letter code: Small ribosomal subunit protein uS7 (156 aa).

The protein belongs to the universal ribosomal protein uS7 family. As to quaternary structure, part of the 30S ribosomal subunit. Contacts proteins S9 and S11.

In terms of biological role, one of the primary rRNA binding proteins, it binds directly to 16S rRNA where it nucleates assembly of the head domain of the 30S subunit. Is located at the subunit interface close to the decoding center, probably blocks exit of the E-site tRNA. This is Small ribosomal subunit protein uS7 from Rhizobium etli (strain ATCC 51251 / DSM 11541 / JCM 21823 / NBRC 15573 / CFN 42).